We begin with the raw amino-acid sequence, 70 residues long: Large ribosomal subunit protein bL31 (70 aa).

4 residues coordinate Zn(2+): Cys16, Cys18, Cys37, and Cys40.

This sequence belongs to the bacterial ribosomal protein bL31 family. Type A subfamily. In terms of assembly, part of the 50S ribosomal subunit. It depends on Zn(2+) as a cofactor.

In terms of biological role, binds the 23S rRNA. This chain is Large ribosomal subunit protein bL31, found in Haemophilus ducreyi (strain 35000HP / ATCC 700724).